A 177-amino-acid chain; its full sequence is ATP synthase subunit delta 1 (177 aa).

It belongs to the ATPase delta chain family. In terms of assembly, F-type ATPases have 2 components, F(1) - the catalytic core - and F(0) - the membrane proton channel. F(1) has five subunits: alpha(3), beta(3), gamma(1), delta(1), epsilon(1). F(0) has three main subunits: a(1), b(2) and c(10-14). The alpha and beta chains form an alternating ring which encloses part of the gamma chain. F(1) is attached to F(0) by a central stalk formed by the gamma and epsilon chains, while a peripheral stalk is formed by the delta and b chains.

The protein localises to the cell inner membrane. Its function is as follows. F(1)F(0) ATP synthase produces ATP from ADP in the presence of a proton or sodium gradient. F-type ATPases consist of two structural domains, F(1) containing the extramembraneous catalytic core and F(0) containing the membrane proton channel, linked together by a central stalk and a peripheral stalk. During catalysis, ATP synthesis in the catalytic domain of F(1) is coupled via a rotary mechanism of the central stalk subunits to proton translocation. Functionally, this protein is part of the stalk that links CF(0) to CF(1). It either transmits conformational changes from CF(0) to CF(1) or is implicated in proton conduction. In Vibrio atlanticus (strain LGP32) (Vibrio splendidus (strain Mel32)), this protein is ATP synthase subunit delta 1.